The following is a 183-amino-acid chain: MTANAQQLQFIKDSIETIPDYPKEGILFRDITTLLDNPAAYQATIDLLVEHYQGQGITKVVGTEARGFLFGAPVALRLGVGFVPVRKKGKLPRETLSETYDLEYGTDTLEIHKDSITDKDKVLMVDDLLATGGTIEATARLIRRLGGTVTEAAFIICLPDLGGIERLEKEGIHSFTLVNFPGH.

This sequence belongs to the purine/pyrimidine phosphoribosyltransferase family. Homodimer.

Its subcellular location is the cytoplasm. It carries out the reaction AMP + diphosphate = 5-phospho-alpha-D-ribose 1-diphosphate + adenine. Its pathway is purine metabolism; AMP biosynthesis via salvage pathway; AMP from adenine: step 1/1. Catalyzes a salvage reaction resulting in the formation of AMP, that is energically less costly than de novo synthesis. This is Adenine phosphoribosyltransferase from Proteus mirabilis (strain HI4320).